Consider the following 191-residue polypeptide: GDP-mannose pyrophosphatase (191 aa).

Residues Tyr-17, 38 to 40 (KRE), Arg-67, and 85 to 87 (AGL) contribute to the GDP-alpha-D-mannose site. In terms of domain architecture, Nudix hydrolase spans 43-180 (DRGNGATILL…EIRDGKTVLL (138 aa)). Ala-85, Glu-100, and Glu-104 together coordinate Mg(2+). The short motif at 86–106 (GLLDNDEPEVCIRKEAIEETG) is the Nudix box element. GDP-alpha-D-mannose contacts are provided by residues Glu-104, Glu-127, 150–151 (DE), and Lys-176. Glu-151 lines the Mg(2+) pocket.

Belongs to the Nudix hydrolase family. NudK subfamily. In terms of assembly, homodimer. The cofactor is Mg(2+).

It carries out the reaction GDP-alpha-D-mannose + H2O = alpha-D-mannose 1-phosphate + GMP + 2 H(+). Functionally, nucleoside diphosphate sugar hydrolase that hydrolyzes GDP-mannose as its preferred substrate, yielding GMP and mannose-1-phosphate. This Salmonella typhi protein is GDP-mannose pyrophosphatase (nudK).